Reading from the N-terminus, the 347-residue chain is Uroporphyrinogen decarboxylase (347 aa).

Residues 36 to 40, D86, Y160, S212, and H326 contribute to the substrate site; that span reads RQAGR.

This sequence belongs to the uroporphyrinogen decarboxylase family. As to quaternary structure, homodimer.

The protein localises to the cytoplasm. It carries out the reaction uroporphyrinogen III + 4 H(+) = coproporphyrinogen III + 4 CO2. It participates in porphyrin-containing compound metabolism; protoporphyrin-IX biosynthesis; coproporphyrinogen-III from 5-aminolevulinate: step 4/4. Functionally, catalyzes the decarboxylation of four acetate groups of uroporphyrinogen-III to yield coproporphyrinogen-III. This Wolbachia sp. subsp. Brugia malayi (strain TRS) protein is Uroporphyrinogen decarboxylase.